The sequence spans 210 residues: Thymidylate kinase (210 aa).

14–21 serves as a coordination point for ATP; sequence GLDRSGKS.

The protein belongs to the thymidylate kinase family.

The enzyme catalyses dTMP + ATP = dTDP + ADP. The protein operates within pyrimidine metabolism; dTTP biosynthesis. Functionally, catalyzes the conversion of dTMP to dTDP. This is Thymidylate kinase (tmp1) from Schizosaccharomyces pombe (strain 972 / ATCC 24843) (Fission yeast).